The primary structure comprises 286 residues: MKRLKRTADLRALVADWRREGLRVGLVPTMGNLHEGHLALAEYLAPHCDRLVTSIFVNPLQFGPNEDYESYPRTFGEDCAGLEARGVDAVFAPPVEEMYRGGVRQATRVEVGALAERLCGISRPGHFTGVATVVVKLFNLVQPDVAVFGRKDYQQLRVIEQVVSDLNIPVEVRGMPTVREPDGLAMSSRNGYLTQQERHIAPGLYRTLQGMAKRIRAGDDDYRRLEARGRAMLAEQGFQPDYLEVCRADDLTPAAPGDRGLVVAGAAWLGRARLIDNIELELNRDQ.

Residue M30–H37 coordinates ATP. The active-site Proton donor is the H37. Q61 lines the (R)-pantoate pocket. A beta-alanine-binding site is contributed by Q61. G149–D152 contributes to the ATP binding site. Q155 provides a ligand contact to (R)-pantoate. ATP-binding positions include V178 and M186 to R189.

Belongs to the pantothenate synthetase family. As to quaternary structure, homodimer.

It is found in the cytoplasm. It carries out the reaction (R)-pantoate + beta-alanine + ATP = (R)-pantothenate + AMP + diphosphate + H(+). It participates in cofactor biosynthesis; (R)-pantothenate biosynthesis; (R)-pantothenate from (R)-pantoate and beta-alanine: step 1/1. Catalyzes the condensation of pantoate with beta-alanine in an ATP-dependent reaction via a pantoyl-adenylate intermediate. The polypeptide is Pantothenate synthetase (Alkalilimnicola ehrlichii (strain ATCC BAA-1101 / DSM 17681 / MLHE-1)).